The sequence spans 215 residues: Cytochrome b6 (215 aa).

Residues 32–52 (IFYCLGGITLTCFLVQVATGF) form a helical membrane-spanning segment. Cys-35 lines the heme c pocket. Heme b-binding residues include His-86 and His-100. The next 3 helical transmembrane spans lie at 90-110 (ASMM…TGGF), 116-136 (LTWV…VTGY), and 186-206 (LHTF…FLMI). 2 residues coordinate heme b: His-187 and His-202.

Belongs to the cytochrome b family. PetB subfamily. The 4 large subunits of the cytochrome b6-f complex are cytochrome b6, subunit IV (17 kDa polypeptide, PetD), cytochrome f and the Rieske protein, while the 4 small subunits are PetG, PetL, PetM and PetN. The complex functions as a dimer. Heme b is required as a cofactor. The cofactor is heme c.

Its subcellular location is the plastid. It localises to the chloroplast thylakoid membrane. In terms of biological role, component of the cytochrome b6-f complex, which mediates electron transfer between photosystem II (PSII) and photosystem I (PSI), cyclic electron flow around PSI, and state transitions. The sequence is that of Cytochrome b6 from Eucalyptus globulus subsp. globulus (Tasmanian blue gum).